Here is a 186-residue protein sequence, read N- to C-terminus: Adrenodoxin, mitochondrial (186 aa).

A mitochondrion-targeting transit peptide spans 1–58 (MAARLLRVASAALGDTAGRWRLLARPRAGAGGLRGSRGPGLGGGAVATRTLSVSGRAQ). Serine 61 carries the phosphoserine modification. Lysine 64 carries the post-translational modification N6-acetyllysine; alternate. Residue lysine 64 is modified to N6-succinyllysine; alternate. Residues 65-169 (ITVHFINRDG…NMTVRVPDAV (105 aa)) enclose the 2Fe-2S ferredoxin-type domain. [2Fe-2S] cluster contacts are provided by cysteine 104, cysteine 110, cysteine 113, and cysteine 150. The residue at position 156 (lysine 156) is an N6-succinyllysine. Serine 175 carries the phosphoserine modification.

It belongs to the adrenodoxin/putidaredoxin family. Interacts with CYP11A1. Requires [2Fe-2S] cluster as cofactor. In terms of tissue distribution, detected in adrenal cortex and corpus luteum (at protein level).

It is found in the mitochondrion matrix. Functionally, essential for the synthesis of various steroid hormones. Participates in the reduction of mitochondrial cytochrome P450 for steroidogenesis. Transfers electrons from adrenodoxin reductase to CYP11A1, a cytochrome P450 that catalyzes cholesterol side-chain cleavage to produce pregnenolone, the precursor of most steroid hormones. Does not form a ternary complex with adrenodoxin reductase and CYP11A1 but shuttles between the two enzymes to transfer electrons. This Bos taurus (Bovine) protein is Adrenodoxin, mitochondrial (FDX1).